Here is an 840-residue protein sequence, read N- to C-terminus: Heat shock 70 kDa protein 4 (840 aa).

Lys53 bears the N6-acetyllysine mark. Ser76 carries the phosphoserine modification. Residues Tyr89 and Tyr336 each carry the phosphotyrosine modification. Ser393 and Ser415 each carry phosphoserine. Position 430 is an N6-acetyllysine (Lys430). A disordered region spans residues 500–575 (VHKSEESEEP…QAKKAKVKTS (76 aa)). A compositionally biased stretch (basic and acidic residues) spans 514-533 (QNAKEEEKMQVDQEEPHTEE). Phosphothreonine is present on Thr538. A Phosphoserine modification is found at Ser546. At Tyr660 the chain carries Phosphotyrosine. A Phosphoserine modification is found at Ser756. An N6-methyllysine modification is found at Lys773. The interval 781–840 (PIISKPKPKVEPPKEEPKHAEQNGPVDGQGDNPGTQAAEHGADTAVPSDGDKKLPEMDID) is disordered. Basic and acidic residues-rich tracts occupy residues 788–801 (PKVE…KHAE) and 829–840 (DGDKKLPEMDID).

Belongs to the heat shock protein 70 family. As to quaternary structure, interacts with TJP1/ZO-1. Ubiquitous. Highly expressed in testis.

The protein localises to the cytoplasm. This Rattus norvegicus (Rat) protein is Heat shock 70 kDa protein 4 (Hspa4).